The chain runs to 122 residues: Small ribosomal subunit protein uS13 (122 aa).

Positions 91–122 are disordered; sequence RHRRGLPVHGQRTKTNARTRKGPKRTVAGKKK.

It belongs to the universal ribosomal protein uS13 family. As to quaternary structure, part of the 30S ribosomal subunit. Forms a loose heterodimer with protein S19. Forms two bridges to the 50S subunit in the 70S ribosome.

In terms of biological role, located at the top of the head of the 30S subunit, it contacts several helices of the 16S rRNA. In the 70S ribosome it contacts the 23S rRNA (bridge B1a) and protein L5 of the 50S subunit (bridge B1b), connecting the 2 subunits; these bridges are implicated in subunit movement. Contacts the tRNAs in the A and P-sites. In Kocuria rhizophila (strain ATCC 9341 / DSM 348 / NBRC 103217 / DC2201), this protein is Small ribosomal subunit protein uS13.